Here is a 246-residue protein sequence, read N- to C-terminus: 4'-phosphopantetheinyl transferase Svp (246 aa).

Residues 223-232 are compositionally biased toward low complexity; sequence AGTAEESAEG. Positions 223–246 are disordered; it reads AGTAEESAEGAGKEATADDRTAVP. Over residues 233-246 the composition is skewed to basic and acidic residues; the sequence is AGKEATADDRTAVP.

The protein belongs to the P-Pant transferase superfamily. Gsp/Sfp/HetI/AcpT family.

It catalyses the reaction apo-[ACP] + CoA = holo-[ACP] + adenosine 3',5'-bisphosphate + H(+). Its function is as follows. Transfers the 4'-phosphopantetheine moiety from coenzyme A to a Ser of an acyl-carrier-protein. The enzyme is able to transfer the cofactor to a broad range of enzymes with acyl- or peptidyl-carrier protein domains. The chain is 4'-phosphopantetheinyl transferase Svp (svp) from Streptomyces mobaraensis (Streptoverticillium mobaraense).